Consider the following 505-residue polypeptide: Prenylcysteine oxidase 1 (505 aa).

An N-terminal signal peptide occupies residues 1–28 (MGRFAAALVGSLFWLGLLLCGLGSLASA). Asn196, Asn323, and Asn353 each carry an N-linked (GlcNAc...) asparagine glycan.

It belongs to the prenylcysteine oxidase family. Requires FAD as cofactor. As to expression, highly expressed in the liver, kidney, heart and brain.

The protein localises to the lysosome. It carries out the reaction an S-polyprenyl-L-cysteine + O2 + H2O = a polyprenal + L-cysteine + H2O2. The enzyme catalyses S-(2E,6E)-farnesyl-L-cysteine + O2 + H2O = (2E,6E)-farnesal + L-cysteine + H2O2. It catalyses the reaction [(2E,6E,10E)-geranylgeranyl]-L-cysteine + O2 + H2O = (2E,6E,10E)-geranylgeranial + L-cysteine + H2O2. Its function is as follows. Prenylcysteine oxidase that cleaves the thioether bond of prenyl-L-cysteines, such as farnesylcysteine and geranylgeranylcysteine. Only active against free prenylcysteines and not prenylcysteine residues within prenylated proteins or peptides. Involved in the final step in the degradation of prenylated proteins, by degrading prenylcysteines after the protein has been degraded. In Mus musculus (Mouse), this protein is Prenylcysteine oxidase 1.